The sequence spans 373 residues: Glutamate 5-kinase (373 aa).

Lys-15 provides a ligand contact to ATP. Substrate is bound by residues Ser-55, Asp-142, and Asn-154. ATP-binding positions include 174 to 175 and 216 to 222; these read TD and TGGMATK. Residues 281–359 enclose the PUA domain; it reads AGSIVVDAGA…SEIEGILGFR (79 aa).

This sequence belongs to the glutamate 5-kinase family.

Its subcellular location is the cytoplasm. The catalysed reaction is L-glutamate + ATP = L-glutamyl 5-phosphate + ADP. Its pathway is amino-acid biosynthesis; L-proline biosynthesis; L-glutamate 5-semialdehyde from L-glutamate: step 1/2. Its function is as follows. Catalyzes the transfer of a phosphate group to glutamate to form L-glutamate 5-phosphate. The sequence is that of Glutamate 5-kinase from Citrifermentans bemidjiense (strain ATCC BAA-1014 / DSM 16622 / JCM 12645 / Bem) (Geobacter bemidjiensis).